A 580-amino-acid polypeptide reads, in one-letter code: Benzoate--CoA ligase, peroxisomal (580 aa).

The short motif at 578-580 is the Microbody targeting signal element; the sequence is SRL.

This sequence belongs to the ATP-dependent AMP-binding enzyme family.

The protein localises to the peroxisome. The catalysed reaction is benzoate + ATP + CoA = benzoyl-CoA + AMP + diphosphate. Benzoate--CoA ligase involved in benzoyloxyglucosinolate biosynthesis in seeds. Glucosinolates are secondary metabolites involved in pathogen and insect defense of cruciferous plants. The protein is Benzoate--CoA ligase, peroxisomal (AAE20) of Arabidopsis thaliana (Mouse-ear cress).